The following is a 142-amino-acid chain: Large ribosomal subunit protein uL11 (142 aa).

It belongs to the universal ribosomal protein uL11 family. Part of the ribosomal stalk of the 50S ribosomal subunit. Interacts with L10 and the large rRNA to form the base of the stalk. L10 forms an elongated spine to which L12 dimers bind in a sequential fashion forming a multimeric L10(L12)X complex. In terms of processing, one or more lysine residues are methylated.

Functionally, forms part of the ribosomal stalk which helps the ribosome interact with GTP-bound translation factors. The chain is Large ribosomal subunit protein uL11 from Shewanella loihica (strain ATCC BAA-1088 / PV-4).